A 750-amino-acid polypeptide reads, in one-letter code: Photosystem I P700 chlorophyll a apoprotein A1 (750 aa).

A run of 8 helical transmembrane segments spans residues 70–93, 156–179, 195–219, 291–309, 346–369, 385–411, 433–455, and 531–549; these read VFSAHFGQLSIIFLWLSGMYFHGA, LYCTAIGALVFAALMLFAGWFHYH, LNHHLAGLLGLGSLSWAGHQVHVSL, IAHHHLAIAILFLIAGHMY, WHAQLSLNLAMLGSLTIVVAHHMY, LSLFTHHMWIGGFLIVGAAAHAAIFMV, AIISHLNWACIFLGFHSFGLYIH, and FLVHHIHAFTIHVTVLILL. The [4Fe-4S] cluster site is built by Cys573 and Cys582. The next 2 helical transmembrane spans lie at 589 to 610 and 664 to 686; these read HVFLGLFWMYNSISVVIFHFSW and LSAYGLFFLGAHFVWAFSLMFLF. Position 675 (His675) interacts with chlorophyll a'. Residues Met683 and Tyr691 each coordinate chlorophyll a. Trp692 provides a ligand contact to phylloquinone. The chain crosses the membrane as a helical span at residues 724 to 744; sequence AVGVTHYLLGGIATTWAFFLA.

The protein belongs to the PsaA/PsaB family. In terms of assembly, the PsaA/B heterodimer binds the P700 chlorophyll special pair and subsequent electron acceptors. PSI consists of a core antenna complex that captures photons, and an electron transfer chain that converts photonic excitation into a charge separation. The eukaryotic PSI reaction center is composed of at least 11 subunits. It depends on P700 is a chlorophyll a/chlorophyll a' dimer, A0 is one or more chlorophyll a, A1 is one or both phylloquinones and FX is a shared 4Fe-4S iron-sulfur center. as a cofactor.

It is found in the plastid. It localises to the chloroplast thylakoid membrane. The enzyme catalyses reduced [plastocyanin] + hnu + oxidized [2Fe-2S]-[ferredoxin] = oxidized [plastocyanin] + reduced [2Fe-2S]-[ferredoxin]. PsaA and PsaB bind P700, the primary electron donor of photosystem I (PSI), as well as the electron acceptors A0, A1 and FX. PSI is a plastocyanin-ferredoxin oxidoreductase, converting photonic excitation into a charge separation, which transfers an electron from the donor P700 chlorophyll pair to the spectroscopically characterized acceptors A0, A1, FX, FA and FB in turn. Oxidized P700 is reduced on the lumenal side of the thylakoid membrane by plastocyanin. This Jasminum nudiflorum (Winter jasmine) protein is Photosystem I P700 chlorophyll a apoprotein A1.